Reading from the N-terminus, the 798-residue chain is Cation channel sperm-associated auxiliary subunit delta (798 aa).

An N-terminal signal peptide occupies residues methionine 1–alanine 20. The Extracellular segment spans residues glutamine 21–glycine 723. 7 disulfide bridges follow: cysteine 23/cysteine 369, cysteine 59/cysteine 145, cysteine 144/cysteine 152, cysteine 387/cysteine 496, cysteine 510/cysteine 701, cysteine 525/cysteine 572, and cysteine 624/cysteine 652. Residue asparagine 123 is glycosylated (N-linked (GlcNAc...) asparagine). 5 N-linked (GlcNAc...) asparagine glycosylation sites follow: asparagine 230, asparagine 240, asparagine 472, asparagine 538, and asparagine 630. The chain crosses the membrane as a helical span at residues valine 724–lysine 745. The Cytoplasmic segment spans residues leucine 746–histidine 798.

This sequence belongs to the CATSPERD family. Component of the CatSper complex or CatSpermasome composed of the core pore-forming members CATSPER1, CATSPER2, CATSPER3 and CATSPER4 as well as auxiliary members CATSPERB, CATSPERG, CATSPERD, CATSPERE, CATSPERZ, C2CD6/CATSPERT, TMEM249, TMEM262 and EFCAB9. HSPA1 may be an additional auxiliary complex member. The core complex members CATSPER1, CATSPER2, CATSPER3 and CATSPER4 form a heterotetrameric channel. The auxiliary CATSPERB, CATSPERG, CATSPERD and CATSPERE subunits form a pavilion-like structure over the pore which stabilizes the complex through interactions with CATSPER4, CATSPER3, CATSPER1 and CATSPER2 respectively. TMEM262/CATSPERH interacts with CATSPERB, further stabilizing the complex. C2CD6/CATSPERT interacts at least with CATSPERD and is required for targeting the CatSper complex in the flagellar membrane.

The protein localises to the cell projection. It localises to the cilium. The protein resides in the flagellum membrane. Auxiliary component of the CatSper complex, a complex involved in sperm cell hyperactivation. Sperm cell hyperactivation is needed for sperm motility which is essential late in the preparation of sperm for fertilization. Required for CATSPER1 stability before intraflagellar transport and/or incorporation of the CatSper complex channel into the flagellar membrane. The sequence is that of Cation channel sperm-associated auxiliary subunit delta from Homo sapiens (Human).